Consider the following 363-residue polypeptide: NAD(P)H-quinone oxidoreductase subunit 1, chloroplastic (363 aa).

6 consecutive transmembrane segments (helical) span residues 28-48 (WVFV…LAIV), 98-118 (FSFG…VIPF), 129-149 (IGVF…LMSG), 253-273 (FGLF…FVTV), 300-320 (VFVT…FIFV), and 336-356 (LLNL…LLTT).

The protein belongs to the complex I subunit 1 family. NDH is composed of at least 16 different subunits, 5 of which are encoded in the nucleus.

It is found in the plastid. It localises to the chloroplast thylakoid membrane. It carries out the reaction a plastoquinone + NADH + (n+1) H(+)(in) = a plastoquinol + NAD(+) + n H(+)(out). It catalyses the reaction a plastoquinone + NADPH + (n+1) H(+)(in) = a plastoquinol + NADP(+) + n H(+)(out). Functionally, NDH shuttles electrons from NAD(P)H:plastoquinone, via FMN and iron-sulfur (Fe-S) centers, to quinones in the photosynthetic chain and possibly in a chloroplast respiratory chain. The immediate electron acceptor for the enzyme in this species is believed to be plastoquinone. Couples the redox reaction to proton translocation, and thus conserves the redox energy in a proton gradient. This chain is NAD(P)H-quinone oxidoreductase subunit 1, chloroplastic, found in Phaseolus vulgaris (Kidney bean).